The sequence spans 257 residues: Homeobox protein EMX1 (257 aa).

The homeobox DNA-binding region spans 159–218; it reads PKRIRTAFSPSQLLRLERAFEKNHYVVGAERKQLAGSLSLSETQVKVWFQNRRTKYKRQK. Residues 216–257 form a disordered region; that stretch reads RQKLEEEGPESEQKKKGSHHINRWRIATKQANGEDIDVTSND. Positions 217-230 are enriched in basic and acidic residues; that stretch reads QKLEEEGPESEQKK.

It belongs to the EMX homeobox family. As to quaternary structure, interacts with WRD11 (via the N-terminal and the central portion of the protein); the interaction associates EMX1 with GLI3. Cerebral cortex. Expressed in the olfactory bulbs.

The protein localises to the nucleus. Its function is as follows. Transcription factor, which in cooperation with EMX2, acts to generate the boundary between the roof and archipallium in the developing brain. May function in combinations with OTX1/2 to specify cell fates in the developing central nervous system. The chain is Homeobox protein EMX1 (Emx1) from Mus musculus (Mouse).